Reading from the N-terminus, the 293-residue chain is 4-hydroxy-tetrahydrodipicolinate synthase (293 aa).

Pyruvate is bound at residue T51. The active-site Proton donor/acceptor is the Y140. K168 serves as the catalytic Schiff-base intermediate with substrate. Position 209 (I209) interacts with pyruvate.

This sequence belongs to the DapA family. As to quaternary structure, homotetramer; dimer of dimers.

It is found in the cytoplasm. The enzyme catalyses L-aspartate 4-semialdehyde + pyruvate = (2S,4S)-4-hydroxy-2,3,4,5-tetrahydrodipicolinate + H2O + H(+). Its pathway is amino-acid biosynthesis; L-lysine biosynthesis via DAP pathway; (S)-tetrahydrodipicolinate from L-aspartate: step 3/4. Catalyzes the condensation of (S)-aspartate-beta-semialdehyde [(S)-ASA] and pyruvate to 4-hydroxy-tetrahydrodipicolinate (HTPA). This chain is 4-hydroxy-tetrahydrodipicolinate synthase, found in Streptococcus mutans serotype c (strain ATCC 700610 / UA159).